Reading from the N-terminus, the 199-residue chain is GTP cyclohydrolase-2 (199 aa).

Residue 52–56 (RMHSE) participates in GTP binding. Zn(2+) contacts are provided by Cys57, Cys68, and Cys70. Residues Gln73, 94 to 96 (EGR), and Thr116 contribute to the GTP site. Catalysis depends on Asp128, which acts as the Proton acceptor. The active-site Nucleophile is the Arg130. 2 residues coordinate GTP: Thr151 and Lys156.

This sequence belongs to the GTP cyclohydrolase II family. Zn(2+) is required as a cofactor.

It carries out the reaction GTP + 4 H2O = 2,5-diamino-6-hydroxy-4-(5-phosphoribosylamino)-pyrimidine + formate + 2 phosphate + 3 H(+). The protein operates within cofactor biosynthesis; riboflavin biosynthesis; 5-amino-6-(D-ribitylamino)uracil from GTP: step 1/4. Catalyzes the conversion of GTP to 2,5-diamino-6-ribosylamino-4(3H)-pyrimidinone 5'-phosphate (DARP), formate and pyrophosphate. The chain is GTP cyclohydrolase-2 from Aliivibrio fischeri (strain MJ11) (Vibrio fischeri).